Here is a 476-residue protein sequence, read N- to C-terminus: Aspartyl/glutamyl-tRNA(Asn/Gln) amidotransferase subunit B (476 aa).

It belongs to the GatB/GatE family. GatB subfamily. Heterotrimer of A, B and C subunits.

The catalysed reaction is L-glutamyl-tRNA(Gln) + L-glutamine + ATP + H2O = L-glutaminyl-tRNA(Gln) + L-glutamate + ADP + phosphate + H(+). It carries out the reaction L-aspartyl-tRNA(Asn) + L-glutamine + ATP + H2O = L-asparaginyl-tRNA(Asn) + L-glutamate + ADP + phosphate + 2 H(+). Functionally, allows the formation of correctly charged Asn-tRNA(Asn) or Gln-tRNA(Gln) through the transamidation of misacylated Asp-tRNA(Asn) or Glu-tRNA(Gln) in organisms which lack either or both of asparaginyl-tRNA or glutaminyl-tRNA synthetases. The reaction takes place in the presence of glutamine and ATP through an activated phospho-Asp-tRNA(Asn) or phospho-Glu-tRNA(Gln). The protein is Aspartyl/glutamyl-tRNA(Asn/Gln) amidotransferase subunit B of Neisseria meningitidis serogroup B (strain ATCC BAA-335 / MC58).